The primary structure comprises 172 residues: MAKMQAKVQADERDDGLREKMISVNRVTKVVKGGRILGFAALTVVGDGDGRIGMGKGKAKEVPVAVQKAMEQARRNMFKVPLKNGTLQHEVHGKHGASAVLLAPAKAGTGVIAGGPMRAVFDVMGVQNVVAKSHGSTNPYNLVRATLDGLRKQSTPADIAAKRGKSVEEILG.

Positions 17–80 constitute an S5 DRBM domain; sequence LREKMISVNR…EQARRNMFKV (64 aa).

The protein belongs to the universal ribosomal protein uS5 family. Part of the 30S ribosomal subunit. Contacts proteins S4 and S8.

With S4 and S12 plays an important role in translational accuracy. Functionally, located at the back of the 30S subunit body where it stabilizes the conformation of the head with respect to the body. The sequence is that of Small ribosomal subunit protein uS5 from Burkholderia lata (strain ATCC 17760 / DSM 23089 / LMG 22485 / NCIMB 9086 / R18194 / 383).